The sequence spans 106 residues: Large ribosomal subunit protein P2 (106 aa).

The tract at residues 79–106 (GAGAVAEAKKEEPEEEEADDDMGFGLFD) is disordered. Positions 91-100 (PEEEEADDDM) are enriched in acidic residues.

Belongs to the eukaryotic ribosomal protein P1/P2 family. P1 and P2 exist as dimers at the large ribosomal subunit. Phosphorylated.

In terms of biological role, plays an important role in the elongation step of protein synthesis. This Leishmania infantum protein is Large ribosomal subunit protein P2 (LIP).